A 714-amino-acid chain; its full sequence is Mitochondrial potassium channel ATP-binding subunit (714 aa).

The transit peptide at 1–25 (MLVHLFRVGIRGGPVPRWSLQSLRF) directs the protein to the mitochondrion. Transmembrane regions (helical) follow at residues 127–147 (LLAL…NVQI), 178–198 (IQLL…LVLL), 278–298 (LMLA…GSGL), and 365–385 (NIAF…LVAG). The ABC transmembrane type-1 domain maps to 132–419 (LAIVLALGAA…LSVLFGQVVR (288 aa)). One can recognise an ABC transporter domain in the interval 454–691 (ITFQNVSFSY…GGLYAELIRR (238 aa)). 489-496 (GQSGGGKT) is a binding site for ATP.

The protein belongs to the ABC transporter superfamily. ABCB family. Multidrug resistance exporter (TC 3.A.1.201) subfamily. In terms of assembly, the mitochondrial potassium channel (mitoK(ATP)) is composed of 4 subunits of CCDC51/MITOK and 4 subunits of ABCB8/MITOSUR. Physically interacts with PAAT. Interacts with Neuropilin-1 (NRP1) in mitochondria. Strong expression is found in the heart, brain and testis. In the testis, expressed both in the somatic Sertoli cells and peritubular cells and in the germline (spermatogonia and pachytene spermatocytes). Also expressed in the lung, liver, intestine and kidney.

Its subcellular location is the mitochondrion inner membrane. Its activity is regulated as follows. Channel activity inhibited by ATP via ABCB8/MITOSUR subunit. In terms of biological role, ATP-binding subunit of the mitochondrial ATP-gated potassium channel (mitoK(ATP)). v. An increase in ATP intracellular levels closes the channel, inhibiting K(+) transport, whereas a decrease in ATP levels enhances K(+) uptake in the mitochondrial matrix. Plays a role in mitochondrial iron transport. Required for maintenance of normal cardiac function, possibly by influencing mitochondrial iron export and regulating the maturation of cytosolic iron sulfur cluster-containing enzymes. The protein is Mitochondrial potassium channel ATP-binding subunit of Rattus norvegicus (Rat).